Consider the following 1377-residue polypeptide: DNA-directed RNA polymerase subunit beta (1377 aa).

The protein belongs to the RNA polymerase beta chain family. The RNAP catalytic core consists of 2 alpha, 1 beta, 1 beta' and 1 omega subunit. When a sigma factor is associated with the core the holoenzyme is formed, which can initiate transcription.

The catalysed reaction is RNA(n) + a ribonucleoside 5'-triphosphate = RNA(n+1) + diphosphate. In terms of biological role, DNA-dependent RNA polymerase catalyzes the transcription of DNA into RNA using the four ribonucleoside triphosphates as substrates. The chain is DNA-directed RNA polymerase subunit beta from Cereibacter sphaeroides (strain ATCC 17029 / ATH 2.4.9) (Rhodobacter sphaeroides).